Reading from the N-terminus, the 59-residue chain is Large ribosomal subunit protein uL30 (59 aa).

Belongs to the universal ribosomal protein uL30 family. As to quaternary structure, part of the 50S ribosomal subunit.

The sequence is that of Large ribosomal subunit protein uL30 from Rhodococcus erythropolis (strain PR4 / NBRC 100887).